The sequence spans 467 residues: 5-phosphohydroxy-L-lysine phospho-lyase (467 aa).

The residue at position 278 (K278) is an N6-(pyridoxal phosphate)lysine.

The protein belongs to the class-III pyridoxal-phosphate-dependent aminotransferase family. Homotetramer. Pyridoxal 5'-phosphate is required as a cofactor.

The protein localises to the mitochondrion. It carries out the reaction (5R)-5-phosphooxy-L-lysine + H2O = (S)-2-amino-6-oxohexanoate + NH4(+) + phosphate. Its function is as follows. Catalyzes the pyridoxal-phosphate-dependent breakdown of 5-phosphohydroxy-L-lysine, converting it to ammonia, inorganic phosphate and 2-aminoadipate semialdehyde. The protein is 5-phosphohydroxy-L-lysine phospho-lyase (Phykpl) of Mus musculus (Mouse).